Here is a 124-residue protein sequence, read N- to C-terminus: Small ribosomal subunit protein uS12c (124 aa).

Disordered regions lie at residues 1-28 (MPTI…QSCP) and 104-124 (AAGV…KPKS). 2 stretches are compositionally biased toward basic residues: residues 11 to 20 (ERRKIHKKTK) and 109 to 124 (DRRK…KPKS).

This sequence belongs to the universal ribosomal protein uS12 family. Part of the 30S ribosomal subunit.

It is found in the plastid. Its subcellular location is the chloroplast. With S4 and S5 plays an important role in translational accuracy. Located at the interface of the 30S and 50S subunits. This is Small ribosomal subunit protein uS12c (rps12) from Pyropia yezoensis (Susabi-nori).